The sequence spans 1083 residues: Chitin synthase 2 (1083 aa).

2 stretches are compositionally biased toward basic and acidic residues: residues 1–10 and 18–30; these read MSSEREERTF and DDVRENISNENQE. 2 disordered regions span residues 1–248 and 260–294; these read MSSE…IADD and DDDVFAPESDLSDARPHPVDRSSYMSSESQDTLNE. A glycan (N-linked (GlcNAc...) asparagine) is linked at Asn23. 2 stretches are compositionally biased toward polar residues: residues 38 to 49 and 61 to 70; these read SYASSMAESQTL and AKLQNKNRTS. Asn67 carries N-linked (GlcNAc...) asparagine glycosylation. Composition is skewed to basic and acidic residues over residues 78–100 and 117–128; these read LPRDLPEIPDGISDRRRVHKEQQ and RLRDVNSHDKLP. Polar residues-rich tracts occupy residues 132-148, 177-191, and 282-292; these read SPRNLNYQPSVRSSRSG, RPWTPSSRVSGFTRS, and SYMSSESQDTL. A glycan (N-linked (GlcNAc...) asparagine) is linked at Asn417. 8 consecutive transmembrane segments (helical) span residues 708–728, 747–767, 785–805, 820–840, 860–880, 889–909, 987–1007, and 1020–1040; these read WLNGAFFAAVYSLVHFKQIWF, FIQLMFTFFSLANFYLTFYFV, TVIFHILRYACVLLISTQFIL, ISMIIYSIIMVYTTFATFYII, NMIVSILSTIGMYFIMSILYL, SAQYFILLPSYICTLQVYAFC, YLVLTWMIGNGILGMAVSEIY, and FLLWSVAALAVFRAIGSTTFA.

Belongs to the chitin synthase family. Class II subfamily.

It localises to the cell membrane. It catalyses the reaction [(1-&gt;4)-N-acetyl-beta-D-glucosaminyl](n) + UDP-N-acetyl-alpha-D-glucosamine = [(1-&gt;4)-N-acetyl-beta-D-glucosaminyl](n+1) + UDP + H(+). In terms of biological role, polymerizes chitin, a structural polymer of the cell wall and septum, by transferring the sugar moiety of UDP-GlcNAc to the non-reducing end of the growing chitin polymer. Plays a critical role in cell wall integrity and virulence. This chain is Chitin synthase 2, found in Fusarium oxysporum f. sp. lycopersici (strain 4287 / CBS 123668 / FGSC 9935 / NRRL 34936) (Fusarium vascular wilt of tomato).